Consider the following 95-residue polypeptide: Co-chaperonin GroES (95 aa).

This sequence belongs to the GroES chaperonin family. Heptamer of 7 subunits arranged in a ring. Interacts with the chaperonin GroEL.

It localises to the cytoplasm. In terms of biological role, together with the chaperonin GroEL, plays an essential role in assisting protein folding. The GroEL-GroES system forms a nano-cage that allows encapsulation of the non-native substrate proteins and provides a physical environment optimized to promote and accelerate protein folding. GroES binds to the apical surface of the GroEL ring, thereby capping the opening of the GroEL channel. This chain is Co-chaperonin GroES, found in Beijerinckia indica subsp. indica (strain ATCC 9039 / DSM 1715 / NCIMB 8712).